The primary structure comprises 557 residues: Leucine-rich glioma-inactivated protein 1 (557 aa).

A signal peptide spans 1–34 (MESERSKRMGNACIPLKRIAYFLCLLSALLLTEG). The region spanning 35–72 (KKPAKPKCPAVCTCTKDNALCENARSIPRTVPPDVISL) is the LRRNT domain. LRR repeat units follow at residues 92–113 (SLQLLLFTSNSFDVISDDAFIG), 116–137 (HLEYLFIENNNIKSISRHTFRG), and 140–161 (SLIHLSLANNNLQTLPKDIFKG). Residues 173–223 (NSFNCDCKLKWLVEWLGHTNATVEDIYCEGPPEYKKRKINSLSSKDFDCII) enclose the LRRCT domain. An N-linked (GlcNAc...) asparagine glycan is attached at N192. EAR repeat units follow at residues 225–267 (EFAK…EWDH), 271–313 (TFRN…KRDS), 317–364 (KFIK…KWNG), 366–415 (GFYS…QWNK), 419–462 (LFTN…KWGG), 464–506 (SFQD…NWDA), and 510–552 (KFVK…KHVI). The N-linked (GlcNAc...) asparagine glycan is linked to N277. Residue N422 is glycosylated (N-linked (GlcNAc...) asparagine).

As to quaternary structure, oligomer. Interacts with KCNA1 within a complex containing KCNA1, KCNA4 and KCNAB1. Part of a complex containing ADAM22, DLG4/PSD95 and CACNG2/Stargazin. Can bind to ADAM11 and ADAM23. In terms of processing, glycosylated. Predominantly expressed in neural tissues, especially in brain. Expression is reduced in low-grade brain tumors and significantly reduced or absent in malignant gliomas. In terms of tissue distribution, expressed in the occipital cortex and hippocampus; higher amounts are observed in the parietal and frontal cortices, putamen, and, particularly, in the temporal neocortex, where it is between 3 and 5 times more abundant than in the hippocampus (at protein level). Expression is absent in the cerebellum. As to expression, abundantly expressed in the occipital cortex and weakly expressed in the hippocampus (at protein level).

Its subcellular location is the secreted. It is found in the synapse. The protein localises to the cytoplasm. The protein resides in the golgi apparatus. It localises to the endoplasmic reticulum. In terms of biological role, regulates voltage-gated potassium channels assembled from KCNA1, KCNA4 and KCNAB1. It slows down channel inactivation by precluding channel closure mediated by the KCNAB1 subunit. Ligand for ADAM22 that positively regulates synaptic transmission mediated by AMPA-type glutamate receptors. Plays a role in suppressing the production of MMP1/3 through the phosphatidylinositol 3-kinase/ERK pathway. May play a role in the control of neuroblastoma cell survival. The chain is Leucine-rich glioma-inactivated protein 1 (LGI1) from Homo sapiens (Human).